A 556-amino-acid polypeptide reads, in one-letter code: CBS domain-containing protein CBSCBSPB3 (556 aa).

2 stretches are compositionally biased toward polar residues: residues 1–20 (MSTQATGPSSTSGRRSNSTV) and 30–44 (PVQSENGSVNGNTSK). The disordered stretch occupies residues 1–63 (MSTQATGPSS…SQAPSNGERT (63 aa)). The residue at position 2 (S2) is an N-acetylserine. CBS domains follow at residues 68 to 127 (RLSK…RPDQ), 134 to 189 (MTRN…RMEK), 235 to 294 (ITDN…LSPE), and 302 to 360 (MTPN…ENSS). Residues 414–502 (GNSFSFKFED…KVLRLHLDFT (89 aa)) form the PB1 domain. A helical membrane pass occupies residues 527–549 (WVSWRGGVVVTGAVVLTSIAIVV).

It localises to the membrane. This chain is CBS domain-containing protein CBSCBSPB3 (CBSCBSPB3), found in Arabidopsis thaliana (Mouse-ear cress).